The sequence spans 90 residues: Large ribosomal subunit protein eL34 (90 aa).

The disordered stretch occupies residues 38 to 65 (ARCGRPLGGVPRGRPPRVRRLSKTAKRP). The span at 51 to 62 (RPPRVRRLSKTA) shows a compositional bias: basic residues.

The protein belongs to the eukaryotic ribosomal protein eL34 family.

In Aeropyrum pernix (strain ATCC 700893 / DSM 11879 / JCM 9820 / NBRC 100138 / K1), this protein is Large ribosomal subunit protein eL34 (rpl34e).